The sequence spans 148 residues: 3-dehydroquinate dehydratase (148 aa).

Y23 functions as the Proton acceptor in the catalytic mechanism. Substrate-binding residues include N75, H81, and D88. The active-site Proton donor is the H101. Substrate is bound by residues 102 to 103 and R112; that span reads LS.

This sequence belongs to the type-II 3-dehydroquinase family. Homododecamer.

It catalyses the reaction 3-dehydroquinate = 3-dehydroshikimate + H2O. Its pathway is metabolic intermediate biosynthesis; chorismate biosynthesis; chorismate from D-erythrose 4-phosphate and phosphoenolpyruvate: step 3/7. Functionally, catalyzes a trans-dehydration via an enolate intermediate. This is 3-dehydroquinate dehydratase from Halorhodospira halophila (strain DSM 244 / SL1) (Ectothiorhodospira halophila (strain DSM 244 / SL1)).